The chain runs to 726 residues: MSTSDDIHNTTATGKCPFHQGGHDQSAGGGTTTRDWWPNQLRVDLLNQHSNRSNPLGEDFDYRKEFSKLDYYGLKKDLKALLTESQPWWPADWGSYAGLFIRMAWHGAGTYRSIDGRGGAGRGQQRFAPLNSWPDNVSLDKARRLLWPIKQKYGQKISWADLFILAGNVALESSGFRTFGFGAGREDVWEPDLDVNWGDEKAWLTHRHPEALAKAPLGATEMGLIYVNPEGPDHSGEPLSAAAAIRATFGNMGMNDEETVALIAGGHTLGKTHGAGPTSNVGPDPEAAPIEEQGLGWASTYGSGVGADAITSGLEVVWTQTPTQWSNYFFENLFKYEWVQTRSPAGAIQFEAVDAPEIIPDPFDPSKKRKPTMLVTDLTLRFDPEFEKISRRFLNDPQAFNEAFARAWFKLTHRDMGPKSRYIGPEVPKEDLIWQDPLPQPIYNPTEQDIIDLKFAIADSGLSVSELVSVAWASASTFRGGDKRGGANGARLALMPQRDWDVNAAAVRALPVLEKIQKESGKASLADIIVLAGVVGVEKAASAAGLSIHVPFAPGRVDARQDQTDIEMFELLEPIADGFRNYRARLDVSTTESLLIDKAQQLTLTAPEMTALVGGMRVLGANFDGSKNGVFTDRVGVLSNDFFVNLLDMRYEWKATDESKELFEGRDRETGEVKYTASRADLVFGSNSVLRAVAEVYASSDAHEKFVKDFVAAWVKVMNLDRFDLL.

Residues 1 to 33 (MSTSDDIHNTTATGKCPFHQGGHDQSAGGGTTT) form a disordered region. A cross-link (tryptophyl-tyrosyl-methioninium (Trp-Tyr) (with M-252)) is located at residues 105–226 (WHGAGTYRSI…LGATEMGLIY (122 aa)). Residue H106 is the Proton acceptor of the active site. A cross-link (tryptophyl-tyrosyl-methioninium (Tyr-Met) (with W-105)) is located at residues 226-252 (YVNPEGPDHSGEPLSAAAAIRATFGNM). H267 lines the heme b pocket.

Belongs to the peroxidase family. Peroxidase/catalase subfamily. As to quaternary structure, homodimer or homotetramer. Heme b serves as cofactor. In terms of processing, formation of the three residue Trp-Tyr-Met cross-link is important for the catalase, but not the peroxidase activity of the enzyme.

The enzyme catalyses H2O2 + AH2 = A + 2 H2O. It carries out the reaction 2 H2O2 = O2 + 2 H2O. Its function is as follows. Bifunctional enzyme with both catalase and broad-spectrum peroxidase activity. The sequence is that of Catalase-peroxidase from Escherichia coli (strain UTI89 / UPEC).